Consider the following 216-residue polypeptide: Ribosome maturation factor RimP (216 aa).

The protein belongs to the RimP family.

Its subcellular location is the cytoplasm. Its function is as follows. Required for maturation of 30S ribosomal subunits. This chain is Ribosome maturation factor RimP, found in Bartonella quintana (strain Toulouse) (Rochalimaea quintana).